A 432-amino-acid chain; its full sequence is NADH-quinone oxidoreductase subunit D (432 aa).

It belongs to the complex I 49 kDa subunit family. NDH-1 is composed of 14 different subunits. Subunits NuoB, C, D, E, F, and G constitute the peripheral sector of the complex.

It localises to the cell membrane. The enzyme catalyses a quinone + NADH + 5 H(+)(in) = a quinol + NAD(+) + 4 H(+)(out). In terms of biological role, NDH-1 shuttles electrons from NADH, via FMN and iron-sulfur (Fe-S) centers, to quinones in the respiratory chain. The immediate electron acceptor for the enzyme in this species is believed to be a menaquinone. Couples the redox reaction to proton translocation (for every two electrons transferred, four hydrogen ions are translocated across the cytoplasmic membrane), and thus conserves the redox energy in a proton gradient. The protein is NADH-quinone oxidoreductase subunit D of Mycobacterium marinum (strain ATCC BAA-535 / M).